A 291-amino-acid polypeptide reads, in one-letter code: Lactoylglutathione lyase (291 aa).

VOC domains lie at 24–149 (RLLH…LIQR) and 155–283 (PLCQ…LVDN). 3 residues coordinate substrate: arginine 31, asparagine 82, and histidine 96. Residue histidine 96 is part of the active site. Glutamate 145 functions as the Proton donor/acceptor in the catalytic mechanism. Glutamate 145 is a binding site for Ni(2+). Residues glutamine 158 and glutamate 209 contribute to the active site. A Ni(2+)-binding site is contributed by glutamate 209.

Belongs to the glyoxalase I family. Monomer. It depends on Ni(2+) as a cofactor. In terms of processing, phosphorylated after gibberellin treatment. Expressed in callus, stem, leaves, panicles and maturing seeds (at protein level).

The enzyme catalyses (R)-S-lactoylglutathione = methylglyoxal + glutathione. It participates in secondary metabolite metabolism; methylglyoxal degradation; (R)-lactate from methylglyoxal: step 1/2. Catalyzes the conversion of hemimercaptal, formed from methylglyoxal and glutathione, to S-lactoylglutathione. Involved in the detoxifiation of methylglyoxal. Can functionally complement growth defect of a yeast mutant lacking GLY I. Involved in abiotic stress response. Over-expression of GLYI-11 in tobacco increases tolerance to osmotic, oxidative and salt stresses. The chain is Lactoylglutathione lyase from Oryza sativa subsp. japonica (Rice).